The following is a 106-amino-acid chain: uncharacterized protein (106 aa).

An N-terminal signal peptide occupies residues 1 to 27; the sequence is MHHFVPSISLFMASVSFSVFFSHLATS. Residues 42–62 traverse the membrane as a helical segment; the sequence is TLFSMVPLINSSFNLSVFLFF.

It is found in the membrane. This is an uncharacterized protein from Saccharomyces cerevisiae (strain ATCC 204508 / S288c) (Baker's yeast).